A 276-amino-acid chain; its full sequence is NAD-capped RNA hydrolase NudC (276 aa).

Position 82 (Arg-82) interacts with substrate. The Zn(2+) site is built by Cys-112 and Cys-115. Residue Glu-125 coordinates substrate. Zn(2+) is bound by residues Cys-130 and Cys-133. Tyr-138 is a binding site for substrate. The Nudix hydrolase domain maps to 139–262 (PRISPSMIVL…SIARYLIDLY (124 aa)). A divalent metal cation contacts are provided by Ala-172, Glu-188, and Glu-192. The short motif at 173–194 (GFAEPGESAEDCLVREVREEVA) is the Nudix box element. 206–213 (QCWPFPHS) is a binding site for substrate. An a divalent metal cation-binding site is contributed by Glu-233. A substrate-binding site is contributed by Ala-255.

The protein belongs to the Nudix hydrolase family. NudC subfamily. Homodimer. The cofactor is Mg(2+). Requires Mn(2+) as cofactor. It depends on Zn(2+) as a cofactor.

The enzyme catalyses a 5'-end NAD(+)-phospho-ribonucleoside in mRNA + H2O = a 5'-end phospho-adenosine-phospho-ribonucleoside in mRNA + beta-nicotinamide D-ribonucleotide + 2 H(+). It carries out the reaction NAD(+) + H2O = beta-nicotinamide D-ribonucleotide + AMP + 2 H(+). The catalysed reaction is NADH + H2O = reduced beta-nicotinamide D-ribonucleotide + AMP + 2 H(+). Its function is as follows. mRNA decapping enzyme that specifically removes the nicotinamide adenine dinucleotide (NAD) cap from a subset of mRNAs by hydrolyzing the diphosphate linkage to produce nicotinamide mononucleotide (NMN) and 5' monophosphate mRNA. The NAD-cap is present at the 5'-end of some mRNAs and stabilizes RNA against 5'-processing. Has preference for mRNAs with a 5'-end purine. Catalyzes the hydrolysis of a broad range of dinucleotide pyrophosphates. This is NAD-capped RNA hydrolase NudC from Pseudomonas putida (strain ATCC 47054 / DSM 6125 / CFBP 8728 / NCIMB 11950 / KT2440).